A 1003-amino-acid chain; its full sequence is Calcium-transporting ATPase sarcoplasmic/endoplasmic reticulum type (1003 aa).

The Cytoplasmic segment spans residues 1 to 59; that stretch reads MEDAHAKKWEEVVDYFGVDPERGLALEQVKKNQEKYGPNELPAEEGKSLLTLILEQFDD. Residues 60-78 form a helical membrane-spanning segment; the sequence is LLVKILLLAAIISLVLALF. The Extracellular segment spans residues 79–89; sequence EEHDDEAEQLT. A helical membrane pass occupies residues 90–110; sequence AYVEPFVILLILIANAVVGVW. Topologically, residues 111-262 are cytoplasmic; sequence QEKNAESAIE…QQKLDEFGEQ (152 aa). Residues 263–282 traverse the membrane as a helical segment; it reads LSKVISVICVAVWAINIGHF. Residues 283–300 lie on the Extracellular side of the membrane; it reads NDPAHGGSWIKGAIYYFK. The helical transmembrane segment at 301-318 threads the bilayer; it reads IAVALAVAAIPEGLPAVI. The Cytoplasmic portion of the chain corresponds to 319-775; the sequence is TTCLALGTRR…RYLISSNIGE (457 aa). The active-site 4-aspartylphosphate intermediate is aspartate 354. Lysine 519 lines the ATP pocket. A helical transmembrane segment spans residues 776 to 799; that stretch reads VVSIFLTAALGLPEALIPVQLLWV. The Extracellular portion of the chain corresponds to 800–840; it reads NLVTDGLPATALGFNPPDLDIMNKPPRRADEGLITGWLFFR. Residues 841 to 863 traverse the membrane as a helical segment; sequence YMAIGTYVGAATVGAAAHWFMMS. Over 864–898 the chain is Cytoplasmic; that stretch reads PTGPGLNFYQLSHHLQCTPENEYFEGIDCEIFSDP. Residues 899-917 traverse the membrane as a helical segment; it reads HPMTMALSVLVTIEMLNAI. The Extracellular segment spans residues 918–934; the sequence is NSLSENQSLLVMPPWSN. The chain crosses the membrane as a helical span at residues 935-954; the sequence is IWLISAICLSMTLHFVILYV. Over 955-1003 the chain is Cytoplasmic; the sequence is EILSTVFQICPLTLTEWIVVLKISFPVLLLDEVLKFVARKYTDEFSFIK.

Belongs to the cation transport ATPase (P-type) (TC 3.A.3) family.

The protein resides in the sarcoplasmic reticulum membrane. The catalysed reaction is Ca(2+)(in) + ATP + H2O = Ca(2+)(out) + ADP + phosphate + H(+). In terms of biological role, this magnesium-dependent enzyme catalyzes the hydrolysis of ATP coupled with the transport of the calcium. The protein is Calcium-transporting ATPase sarcoplasmic/endoplasmic reticulum type of Artemia franciscana (Brine shrimp).